The following is a 430-amino-acid chain: MIRASAIQRTAMLLRQLRGFSTSATLADKIKVKNPIVELDGDEMTRIIWQKIKDQLILPYLDVDLKYYDLGIESRDATDDQITIDAANAIKEYGVGVKCATITPDEARVKEFHLKKMWLSPNGTIRNILGGTVFRESIIIPCIPRLIPGWEKPIVIGRHAFGDQYKATDLVINEPGRLELRFTPASGGEAQTQKVYDYTGPGVGLAMYNTDESITGFAHASFKMALAKGLPLYMSTKNTILKKYDGRFKDIFQQIYEQDYAAEFEKQGLWYEHRLIDDMVAQMIKSKGGFVMALKNYDGDVQSDIVAQGFGSLGLMTSALMTPDGKAYEAEAAHGTVTRHYRQHQQGKETSTNSIASIFAWTRGLAQRGKLDETPDVVDFASKLEQATIDTVEVDRIMTKDLALAMGKTDRSAYVTTTEFLDAVADRLKK.

Residues 1–27 constitute a mitochondrion transit peptide; that stretch reads MIRASAIQRTAMLLRQLRGFSTSATLA. Residues 101 to 103 and R108 each bind NADP(+); that span reads TIT. Position 103 (T103) interacts with substrate. Residues 120–126, R135, and R158 each bind substrate; that span reads SPNGTIR. D277 contributes to the Mn(2+) binding site. K285 provides a ligand contact to NADP(+). Mn(2+) is bound at residue D300. NADP(+) contacts are provided by residues 335–340 and N353; that span reads GTVTRH.

The protein belongs to the isocitrate and isopropylmalate dehydrogenases family. Homodimer. Mg(2+) serves as cofactor. Requires Mn(2+) as cofactor.

The protein resides in the mitochondrion. The enzyme catalyses D-threo-isocitrate + NADP(+) = 2-oxoglutarate + CO2 + NADPH. Functionally, mitochondrial IDP1 may regulate flux through the tricarboxylic acid cycle and respiration. Its probably critical function is the production of NADPH. This chain is Isocitrate dehydrogenase [NADP], mitochondrial (IDP1), found in Candida tropicalis (Yeast).